The primary structure comprises 505 residues: Ribose import ATP-binding protein RbsA (505 aa).

ABC transporter domains lie at 12 to 249 (LQMK…VGRK) and 259 to 504 (VKKG…VAFS). Residue 44–51 (GENGAGKS) coordinates ATP.

This sequence belongs to the ABC transporter superfamily. Ribose importer (TC 3.A.1.2.1) family. As to quaternary structure, the complex is composed of an ATP-binding protein (RbsA), two transmembrane proteins (RbsC) and a solute-binding protein (RbsB).

It is found in the cell membrane. The enzyme catalyses D-ribose(out) + ATP + H2O = D-ribose(in) + ADP + phosphate + H(+). Part of the ABC transporter complex RbsABC involved in ribose import. Responsible for energy coupling to the transport system. This is Ribose import ATP-binding protein RbsA from Clostridium tetani (strain Massachusetts / E88).